The following is a 633-amino-acid chain: Threonine--tRNA ligase (633 aa).

The region spanning 1–61 (MINVYFSDNS…TEDCKFEVIT (61 aa)) is the TGS domain. The interval 242-533 (DHRKIGKELE…LIEHHSGKLP (292 aa)) is catalytic. Zn(2+) is bound by residues Cys-333, His-384, and His-510.

Belongs to the class-II aminoacyl-tRNA synthetase family. As to quaternary structure, homodimer. Zn(2+) is required as a cofactor.

It localises to the cytoplasm. It carries out the reaction tRNA(Thr) + L-threonine + ATP = L-threonyl-tRNA(Thr) + AMP + diphosphate + H(+). Catalyzes the attachment of threonine to tRNA(Thr) in a two-step reaction: L-threonine is first activated by ATP to form Thr-AMP and then transferred to the acceptor end of tRNA(Thr). Also edits incorrectly charged L-seryl-tRNA(Thr). In Ehrlichia ruminantium (strain Gardel), this protein is Threonine--tRNA ligase.